Consider the following 301-residue polypeptide: tRNA pseudouridine synthase B (301 aa).

Residue Asp38 is the Nucleophile of the active site.

This sequence belongs to the pseudouridine synthase TruB family. Type 1 subfamily.

The enzyme catalyses uridine(55) in tRNA = pseudouridine(55) in tRNA. Responsible for synthesis of pseudouridine from uracil-55 in the psi GC loop of transfer RNAs. This chain is tRNA pseudouridine synthase B, found in Ehrlichia canis (strain Jake).